A 336-amino-acid polypeptide reads, in one-letter code: Galectin-12 (336 aa).

Galectin domains are found at residues 49 to 183 and 212 to 336; these read YVTT…VGFL and CSHA…CVHS.

Not widely expressed. Predominantly expressed in adipose tissue.

The protein localises to the nucleus. In terms of biological role, binds lactose. May participate in the apoptosis of adipocytes. This is Galectin-12 (LGALS12) from Homo sapiens (Human).